The primary structure comprises 401 residues: uncharacterized protein (401 aa).

It belongs to the serpin family.

Its function is as follows. May act as an inhibitor for a host chymotrypsin-like protease. This is an uncharacterized protein from Acanthamoeba polyphaga mimivirus (APMV).